Consider the following 243-residue polypeptide: GrpE protein homolog, mitochondrial (243 aa).

A disordered region spans residues 42 to 75 (TEASKKEGKEDKAEAQGSQEPETAAETNKEAEGA). Basic and acidic residues predominate over residues 44-55 (ASKKEGKEDKAE).

It belongs to the GrpE family. In terms of assembly, component of the PAM complex, at least composed of mtHsp70, MGE1, TIM44, PAM16, PAM17 and PAM18.

Its subcellular location is the mitochondrion matrix. Functionally, essential component of the PAM complex, a complex required for the translocation of transit peptide-containing proteins from the inner membrane into the mitochondrial matrix in an ATP-dependent manner. Seems to control the nucleotide-dependent binding of SSC1 to substrate proteins. This chain is GrpE protein homolog, mitochondrial (mge1), found in Debaryomyces hansenii (strain ATCC 36239 / CBS 767 / BCRC 21394 / JCM 1990 / NBRC 0083 / IGC 2968) (Yeast).